The chain runs to 179 residues: Negative modulator of initiation of replication (179 aa).

It belongs to the SeqA family. Homodimer. Polymerizes to form helical filaments.

It localises to the cytoplasm. Functionally, negative regulator of replication initiation, which contributes to regulation of DNA replication and ensures that replication initiation occurs exactly once per chromosome per cell cycle. Binds to pairs of hemimethylated GATC sequences in the oriC region, thus preventing assembly of replication proteins and re-initiation at newly replicated origins. Repression is relieved when the region becomes fully methylated. This is Negative modulator of initiation of replication from Vibrio atlanticus (strain LGP32) (Vibrio splendidus (strain Mel32)).